Reading from the N-terminus, the 67-residue chain is Large ribosomal subunit protein uL29 (67 aa).

It belongs to the universal ribosomal protein uL29 family.

The chain is Large ribosomal subunit protein uL29 from Sorangium cellulosum (strain So ce56) (Polyangium cellulosum (strain So ce56)).